The sequence spans 354 residues: Uroporphyrinogen decarboxylase (354 aa).

Substrate is bound by residues 35–39, Asp-84, Tyr-159, Ser-214, and His-333; that span reads RQAGR.

The protein belongs to the uroporphyrinogen decarboxylase family. Homodimer.

It localises to the cytoplasm. The enzyme catalyses uroporphyrinogen III + 4 H(+) = coproporphyrinogen III + 4 CO2. It functions in the pathway porphyrin-containing compound metabolism; protoporphyrin-IX biosynthesis; coproporphyrinogen-III from 5-aminolevulinate: step 4/4. In terms of biological role, catalyzes the decarboxylation of four acetate groups of uroporphyrinogen-III to yield coproporphyrinogen-III. In Nocardia farcinica (strain IFM 10152), this protein is Uroporphyrinogen decarboxylase.